Here is a 409-residue protein sequence, read N- to C-terminus: Argininosuccinate synthase (409 aa).

Residues 11 to 19 (AYSGGLDTS) and Ala-38 contribute to the ATP site. L-citrulline contacts are provided by Tyr-91 and Ser-96. Gly-121 contributes to the ATP binding site. L-aspartate contacts are provided by Thr-123, Asn-127, and Asp-128. An L-citrulline-binding site is contributed by Asn-127. Residues Arg-131, Ser-182, Ser-191, Glu-267, and Tyr-279 each coordinate L-citrulline.

This sequence belongs to the argininosuccinate synthase family. Type 1 subfamily. In terms of assembly, homotetramer.

The protein resides in the cytoplasm. The enzyme catalyses L-citrulline + L-aspartate + ATP = 2-(N(omega)-L-arginino)succinate + AMP + diphosphate + H(+). It functions in the pathway amino-acid biosynthesis; L-arginine biosynthesis; L-arginine from L-ornithine and carbamoyl phosphate: step 2/3. The sequence is that of Argininosuccinate synthase from Xanthobacter autotrophicus (strain ATCC BAA-1158 / Py2).